Consider the following 470-residue polypeptide: A-type ATP synthase subunit B (470 aa).

The protein belongs to the ATPase alpha/beta chains family. Has multiple subunits with at least A(3), B(3), C, D, E, F, H, I and proteolipid K(x).

The protein resides in the cell membrane. Component of the A-type ATP synthase that produces ATP from ADP in the presence of a proton gradient across the membrane. The B chain is a regulatory subunit. The chain is A-type ATP synthase subunit B from Haloarcula marismortui (strain ATCC 43049 / DSM 3752 / JCM 8966 / VKM B-1809) (Halobacterium marismortui).